The following is a 2060-amino-acid chain: Fatty acid synthase subunit beta (2060 aa).

Positions 1–32 (MFPGDMESKASSMNGDQPSSPTPSSSTSVTIP) are disordered. Over residues 18-32 (PSSPTPSSSTSVTIP) the composition is skewed to low complexity. Positions 182 to 543 (VYVIFGGQGN…KAGQGVRVIH (362 aa)) are acetyltransferase (AT) domain. The For acetyltransferase activity role is filled by serine 301. Positions 600-845 (TRLFLQPPIM…LIVATEGAPD (246 aa)) are enoyl reductase (ER) domain. The interval 1157–1640 (DKNLNWAKAL…CTGDRLAVSM (484 aa)) is dehydratase (DH) domain. Residues 1549-1661 (FEEQEISFTA…VEVQIHKNMA (113 aa)) form the MaoC-like domain. The segment at 1679-2043 (LVFTGQGSQK…FNEVLRLTGS (365 aa)) is malonyl/palmitoyl transferase (MT/PT) domain. Serine 1824 (for malonyltransferase activity) is an active-site residue.

It belongs to the fungal fatty acid synthetase subunit beta family. As to quaternary structure, [Alpha(6)beta(6)] hexamers of two multifunctional subunits (alpha and beta).

The catalysed reaction is acetyl-CoA + n malonyl-CoA + 2n NADPH + 4n H(+) = a long-chain-acyl-CoA + n CoA + n CO2 + 2n NADP(+).. It carries out the reaction holo-[ACP] + acetyl-CoA = acetyl-[ACP] + CoA. It catalyses the reaction holo-[ACP] + malonyl-CoA = malonyl-[ACP] + CoA. The enzyme catalyses a (3R)-hydroxyacyl-[ACP] = a (2E)-enoyl-[ACP] + H2O. The catalysed reaction is a 2,3-saturated acyl-[ACP] + NAD(+) = a (2E)-enoyl-[ACP] + NADH + H(+). It carries out the reaction (9Z)-octadecenoyl-[ACP] + H2O = (9Z)-octadecenoate + holo-[ACP] + H(+). The protein operates within mycotoxin biosynthesis. In terms of biological role, fatty acid synthase subunit beta; part of the gene cluster that mediates the biosynthesis of gramillins A and B, bicyclic lipopeptides that induce cell death in maize leaves but not in wheat leaves. The nonribosomal peptide synthetase GRA1 incorporates respectively a glutamic adic (Glu), a leucine (Leu), a serine (Ser), a hydroxyglutamine (HOGln), a 2-amino decanoic acid, and 2 cysteins (CysB and CysA). The biosynthesis of 2-amino decanoic acid incorporated in gramillins could be initiated by a fatty acid synthase composed of the alpha and beta subunits FGSG_00036 and FGSG_11656. The cytochrome P450 monooxygenase FGSG_15680 could hydroxylate the fatty acid chain. Subsequent oxidation to the ketone by the oxidoreductase FGSG_00048 and transamination by aminotransferase FGSG_00049 could form 2-amino-decanoic acid. On the other hand, FGSG_15680 could also be responsible for the HO-modified glutamine at the gamma-position. Whether hydroxylation occurs on the fully assembled product or on the Gln residue prior to assembly into the gramillins requires further proof. The thioredoxin FGSG_00043 could also be required for the disulfide-bond formation between CysA and CysB. The specific involvement of the remaining proteins from the cluster is more difficult to discern, but could have broader regulatory (FGSG_00040 and FGSG_11657) or enzymatic functions (FGSG_00044 and FGSG_00045). The final C-domain of GRA1 does not possess the expected sequence of a termination CT domain, often implicated in macrocyclization and release of a cyclopeptidein fungal NRPs; and the thioesterase FGSG_00047 may act in concert with the terminal C-domain of GRA1 to catalyze the formation of the macrocyclic anhydride and release of the products. In Gibberella zeae (strain ATCC MYA-4620 / CBS 123657 / FGSC 9075 / NRRL 31084 / PH-1) (Wheat head blight fungus), this protein is Fatty acid synthase subunit beta.